Consider the following 621-residue polypeptide: SH2B adapter protein 2 (621 aa).

A Phosphotyrosine modification is found at tyrosine 47. At serine 130 the chain carries Phosphoserine. The segment at 144-165 (RASPEPEGGATPKTTEPVSEPR) is disordered. A PH domain is found at 186 to 299 (DIQREGALRF…WVADIQGCVD (114 aa)). A Phosphoserine modification is found at serine 303. Positions 409–507 (WFHGTLSRVK…SADITLRSYV (99 aa)) constitute an SH2 domain. 2 disordered regions span residues 507-528 (VRAQ…PVPA) and 548-609 (PPTS…ATLG). Residues 552-570 (PSNGAGASSSSGSSSSATS) are compositionally biased toward low complexity. At serine 597 the chain carries Phosphoserine. Tyrosine 618 is modified (phosphotyrosine).

It belongs to the SH2B adapter family. Homodimer. Interacts with KIT/c-KIT, SHC1, EPOR, PDGFR, VAV1 and VAV3. Interacts (via N-terminal region) with SHC1. Interacts (via the phosphorylated C-terminus) with GRB2. Interacts (via its SH2 domain) with EPOR, INSR and KIT. Interacts with GRB2 after B-cell antigen receptor stimulation. Interacts (via PH domain) with VAV3. Interacts with NTRK1, NTRK2 and NTRK3 (phosphorylated); after stimulation of the receptor by its extracellular ligand and subsequent autophosphorylation of the receptor. Binds INSR, GRB2, ASB6 and CAP. Insulin stimulation leads to dissociation of CAP. Binds CBS only when SH2B2/APS has become phosphorylated. INSR binding does not depend on the phosphorylation of SH2B2/APS. Phosphorylated on a tyrosine residue by NTRK1, NTRK2, NTRK3 and INSR after stimulation of the receptor by its extracellular ligand. Tyrosine phosphorylated by JAK2, KIT and other kinases activated by B-cell receptor in response to stimulation with cytokines, IL3, IL5, PDGF, IGF1, IGF2, CSF2/GM-CSF and cross-linking of the B-cell receptor complex. As to expression, detected in embryonic brain, spinal cord and cortical neurons.

Its subcellular location is the cytoplasm. The protein localises to the membrane. Its function is as follows. Adapter protein for several members of the tyrosine kinase receptor family. Involved in multiple signaling pathways. Binds to EPOR and suppresses EPO-induced STAT5 activation, possibly through a masking effect on STAT5 docking sites in EPOR. Suppresses PDGF-induced mitogenesis. Involved in stimulation of glucose uptake by insulin. Involved in coupling from immunoreceptor to Ras signaling. Acts as a negative regulator of cytokine signaling in collaboration with CBL. Induces cytoskeletal reorganization and neurite outgrowth in cultured neurons. In Rattus norvegicus (Rat), this protein is SH2B adapter protein 2 (Sh2b2).